Consider the following 381-residue polypeptide: MPFGNTHNKFKLNYKPQEEYPDLSKHNNHMAKVLTPDLYNKLRDKETPSGFTLDDVIQTGVDNPGHPFIMTVGCVAGDEESYTVFKDLFDPIIQDRHGGYKPTDKHKTDLNHENLKGGDDLDPNYVLSSRVRTGRSIKGYTLPPHCSRGERRAVEKLSVEALNSLTGEFKGKYYPLKSMTEQEQQQLIDDHFLFDKPVSPLLLASGMARDWPDARGIWHNDNKSFLVWVNEEDHLRVISMEKGGNMKEVFRRFCVGLQKIEEIFKKAGHPFMWNEHLGYVLTCPSNLGTGLRGGVHVKLANLSKHPKFEEILTRLRLQKRGTGGVDTAAVGAVFDISNADRLGSSEVEQVQLVVDGVKLMVEMEKKLEKGQSIDDMIPAQK.

In terms of domain architecture, Phosphagen kinase N-terminal spans 11-98; that stretch reads KLNYKPQEEY…FDPIIQDRHG (88 aa). In terms of domain architecture, Phosphagen kinase C-terminal spans 125-367; that stretch reads YVLSSRVRTG…KLMVEMEKKL (243 aa). Residue 128-132 participates in ATP binding; it reads SSRVR. S164 carries the phosphoserine modification. T166 is modified (phosphothreonine). S178 bears the Phosphoserine mark. T180 is subject to Phosphothreonine. Residue H191 coordinates ATP. A Phosphoserine modification is found at S199. Residues R236 and R292 each coordinate ATP. A phosphothreonine mark is found at T313 and T322. ATP contacts are provided by residues 320-325 and D335; that span reads RGTGGV. Residue S372 is modified to Phosphoserine.

Belongs to the ATP:guanido phosphotransferase family. In terms of assembly, dimer of identical or non-identical chains, which can be either B (brain type) or M (muscle type). With MM being the major form in skeletal muscle and myocardium, MB existing in myocardium, and BB existing in many tissues, especially brain.

It localises to the cytoplasm. The catalysed reaction is creatine + ATP = N-phosphocreatine + ADP + H(+). Its function is as follows. Reversibly catalyzes the transfer of phosphate between ATP and various phosphogens (e.g. creatine phosphate). Creatine kinase isoenzymes play a central role in energy transduction in tissues with large, fluctuating energy demands, such as skeletal muscle, heart, brain and spermatozoa. The protein is Creatine kinase M-type (Ckm) of Mus musculus (Mouse).